Reading from the N-terminus, the 98-residue chain is Large ribosomal subunit protein uL23 (98 aa).

It belongs to the universal ribosomal protein uL23 family. As to quaternary structure, part of the 50S ribosomal subunit. Contacts protein L29, and trigger factor when it is bound to the ribosome.

Its function is as follows. One of the early assembly proteins it binds 23S rRNA. One of the proteins that surrounds the polypeptide exit tunnel on the outside of the ribosome. Forms the main docking site for trigger factor binding to the ribosome. This is Large ribosomal subunit protein uL23 from Chromohalobacter salexigens (strain ATCC BAA-138 / DSM 3043 / CIP 106854 / NCIMB 13768 / 1H11).